The following is a 268-amino-acid chain: Ribosomal RNA small subunit methyltransferase A (268 aa).

S-adenosyl-L-methionine contacts are provided by asparagine 23, isoleucine 25, glycine 50, glutamate 72, aspartate 97, and asparagine 116.

This sequence belongs to the class I-like SAM-binding methyltransferase superfamily. rRNA adenine N(6)-methyltransferase family. RsmA subfamily.

It localises to the cytoplasm. It carries out the reaction adenosine(1518)/adenosine(1519) in 16S rRNA + 4 S-adenosyl-L-methionine = N(6)-dimethyladenosine(1518)/N(6)-dimethyladenosine(1519) in 16S rRNA + 4 S-adenosyl-L-homocysteine + 4 H(+). Its function is as follows. Specifically dimethylates two adjacent adenosines (A1518 and A1519) in the loop of a conserved hairpin near the 3'-end of 16S rRNA in the 30S particle. May play a critical role in biogenesis of 30S subunits. The sequence is that of Ribosomal RNA small subunit methyltransferase A from Rickettsia bellii (strain RML369-C).